The chain runs to 206 residues: Small ribosomal subunit protein uS4 (206 aa).

An S4 RNA-binding domain is found at 96–158 (SRLDNVVYRM…AKKQLRIQNA (63 aa)).

The protein belongs to the universal ribosomal protein uS4 family. As to quaternary structure, part of the 30S ribosomal subunit. Contacts protein S5. The interaction surface between S4 and S5 is involved in control of translational fidelity.

Functionally, one of the primary rRNA binding proteins, it binds directly to 16S rRNA where it nucleates assembly of the body of the 30S subunit. With S5 and S12 plays an important role in translational accuracy. The sequence is that of Small ribosomal subunit protein uS4 from Francisella tularensis subsp. mediasiatica (strain FSC147).